Consider the following 165-residue polypeptide: Type IV major pilin protein PilE1 (165 aa).

Residues 1-7 (MNTLQKG) constitute a propeptide, leader sequence. Phe-8 carries the N-methylphenylalanine modification. A helical transmembrane segment spans residues 8–28 (FTLIELMIVIAIVGILAAVAL). O-linked (DADDGlc) serine glycosylation is present at Ser-70. The residue at position 75 (Ser-75) is an O-(2-aminoethylphosphoryl)serine; alternate. Residue Ser-75 is modified to O-(2-cholinephosphoryl)serine; alternate. At Ser-75 the chain carries Phosphoserine; alternate. The residue at position 101 (Ser-101) is an O-(sn-1-glycerophosphoryl)serine; partial. An intrachain disulfide couples Cys-128 to Cys-158. A compositionally biased stretch (basic and acidic residues) spans 137–153 (DDTVADAKDGKEIDTKH). Residues 137–165 (DDTVADAKDGKEIDTKHLPSTCRDNFDAK) are disordered.

Belongs to the N-Me-Phe pilin family. The pili are polar flexible filaments of about 5.4 nanometers diameter and 2.5 micrometers average length; they consist of only a single polypeptide chain arranged in a helical configuration of five subunits per turn in the assembled pilus. Post-translationally, the O-linked glycan identified as Gal-GlcNAc disaccharide in PubMed:7477282 and PubMed:10048019 is now identified as either a hexosyl-diacetamidotrideoxyhexoside (DATDHex) by mass spectrometry in PubMed:15249686, or alpha-D-galactopyranosyl-(1-&gt;3)-2,4-diacetamido-2,4-dideoxy-beta-D-glucopyranoside (DADDGlc) by X-ray diffraction in PubMed:16949362. It is not clear whether there is a chemical difference in the glycosylation of the two derivatives of strain MS11 used in these experiments, or not. In some MS11 derivative strains, Ser-75 is modified to O-(2-aminoethylphosphoryl)serine, and in some other derivatives that can be secondarily modified to O-(2-cholinephosphoryl)serine by N-methylation.

It localises to the fimbrium. Its subcellular location is the membrane. Its function is as follows. Major component of the type IV pilus (T4P) that plays a role in cellular adherence, microcolony formation, resistance to neutrophil mediated killing, twitching motility as well as transformation. Mediates the attachment and the formation of bacterial microcolonies on host epithelial cells. Mechanistically, pili retractation induces host NF-kappa-B activation in infected cells, which is temporally associated with the formation of gonococcal microcolonies. The polypeptide is Type IV major pilin protein PilE1 (pilE1) (Neisseria gonorrhoeae).